A 309-amino-acid polypeptide reads, in one-letter code: Serine/threonine-protein phosphatase 2A catalytic subunit beta isoform (309 aa).

The Mn(2+) site is built by Asp-57, His-59, Asp-85, and Asn-117. His-118 (proton donor) is an active-site residue. His-167 and His-241 together coordinate Mn(2+). Tyr-307 is modified (phosphotyrosine). Leu-309 is modified (leucine methyl ester).

This sequence belongs to the PPP phosphatase family. PP-1 subfamily. PP2A consists of a common heterodimeric core enzyme (composed of a 36 kDa catalytic subunit (subunit C) and a 65 kDa constant regulatory subunit (PR65) (subunit A)) that associates with a variety of regulatory subunits. Proteins that associate with the core dimer include three families of regulatory subunits B (the R2/B/PR55/B55, R3/B''/PR72/PR130/PR59 and R5/B'/B56 families), the 48 kDa variable regulatory subunit, viral proteins, and cell signaling molecules. Binds PPME1. May indirectly interact with SGO1, most probably through regulatory B56 subunits. Interacts with CTTNBP2NL. Interacts with PTPA. Found in a complex with at least ARL2, PPP2CB, PPP2R1A, PPP2R2A, PPP2R5E and TBCD. Interacts with TBCD. Part of the core of STRIPAK complexes composed of PP2A catalytic and scaffolding subunits, the striatins (PP2A regulatory subunits), the striatin-associated proteins MOB4, STRIP1 and STRIP2, PDCD10 and members of the STE20 kinases, such as STK24 and STK26. The cofactor is Mn(2+). Reversibly methyl esterified on Leu-309 by leucine carboxyl methyltransferase 1 (Lcmt1) and protein phosphatase methylesterase 1 (Ppme1). Carboxyl methylation influences the affinity of the catalytic subunit for the different regulatory subunits, thereby modulating the PP2A holoenzyme's substrate specificity, enzyme activity and cellular localization. In terms of processing, phosphorylation of either threonine (by autophosphorylation-activated protein kinase) or tyrosine results in inactivation of the phosphatase. Auto-dephosphorylation has been suggested as a mechanism for reactivation. Post-translationally, may be monoubiquitinated by NOSIP.

It is found in the cytoplasm. The protein localises to the nucleus. It localises to the chromosome. The protein resides in the centromere. Its subcellular location is the cytoskeleton. It is found in the spindle pole. It carries out the reaction O-phospho-L-seryl-[protein] + H2O = L-seryl-[protein] + phosphate. The catalysed reaction is O-phospho-L-threonyl-[protein] + H2O = L-threonyl-[protein] + phosphate. Functionally, catalytic subunit of protein phosphatase 2A (PP2A), a serine/threonine phosphatase involved in the regulation of a wide variety of enzymes, signal transduction pathways, and cellular events. PP2A can modulate the activity of phosphorylase B kinase, casein kinase 2, mitogen-stimulated S6 kinase, and MAP-2 kinase. Part of the striatin-interacting phosphatase and kinase (STRIPAK) complexes. STRIPAK complexes have critical roles in protein (de)phosphorylation and are regulators of multiple signaling pathways including Hippo, MAPK, nuclear receptor and cytoskeleton remodeling. Different types of STRIPAK complexes are involved in a variety of biological processes such as cell growth, differentiation, apoptosis, metabolism and immune regulation. The polypeptide is Serine/threonine-protein phosphatase 2A catalytic subunit beta isoform (Ppp2cb) (Mus musculus (Mouse)).